Reading from the N-terminus, the 137-residue chain is Small ribosomal subunit protein uS11 (137 aa).

The segment at 1 to 25 (MADRRRGAARGGAARPRRRERKNIP) is disordered. The segment covering 15–25 (RPRRRERKNIP) has biased composition (basic residues).

This sequence belongs to the universal ribosomal protein uS11 family. Part of the 30S ribosomal subunit. Interacts with proteins S7 and S18. Binds to IF-3.

Functionally, located on the platform of the 30S subunit, it bridges several disparate RNA helices of the 16S rRNA. Forms part of the Shine-Dalgarno cleft in the 70S ribosome. The chain is Small ribosomal subunit protein uS11 from Thermomicrobium roseum (strain ATCC 27502 / DSM 5159 / P-2).